The chain runs to 441 residues: Ribosomal protein uS12 methylthiotransferase RimO (441 aa).

The region spanning 7 to 117 (PKISFVSLGC…VLEAVHRARP (111 aa)) is the MTTase N-terminal domain. Positions 16, 52, 81, 148, 152, and 155 each coordinate [4Fe-4S] cluster. The 238-residue stretch at 134–371 (LTPRHYAYLK…MARQQAISAR (238 aa)) folds into the Radical SAM core domain. One can recognise a TRAM domain in the interval 374 to 440 (KRKVGTRQQV…AYDLHGTVAG (67 aa)).

It belongs to the methylthiotransferase family. RimO subfamily. It depends on [4Fe-4S] cluster as a cofactor.

The protein localises to the cytoplasm. It catalyses the reaction L-aspartate(89)-[ribosomal protein uS12]-hydrogen + (sulfur carrier)-SH + AH2 + 2 S-adenosyl-L-methionine = 3-methylsulfanyl-L-aspartate(89)-[ribosomal protein uS12]-hydrogen + (sulfur carrier)-H + 5'-deoxyadenosine + L-methionine + A + S-adenosyl-L-homocysteine + 2 H(+). Functionally, catalyzes the methylthiolation of an aspartic acid residue of ribosomal protein uS12. In Rhodopseudomonas palustris (strain ATCC BAA-98 / CGA009), this protein is Ribosomal protein uS12 methylthiotransferase RimO.